A 212-amino-acid polypeptide reads, in one-letter code: Protein GrpE (212 aa).

Positions 1 to 68 (MAETSNNKTS…ELESAKKEIE (68 aa)) are disordered. Basic and acidic residues predominate over residues 9–30 (TSEEAKANEKKSQSETLEESKL). The segment covering 40–60 (ETTQTESMETAETETSLQTEL) has biased composition (low complexity).

This sequence belongs to the GrpE family. As to quaternary structure, homodimer.

The protein localises to the cytoplasm. Functionally, participates actively in the response to hyperosmotic and heat shock by preventing the aggregation of stress-denatured proteins, in association with DnaK and GrpE. It is the nucleotide exchange factor for DnaK and may function as a thermosensor. Unfolded proteins bind initially to DnaJ; upon interaction with the DnaJ-bound protein, DnaK hydrolyzes its bound ATP, resulting in the formation of a stable complex. GrpE releases ADP from DnaK; ATP binding to DnaK triggers the release of the substrate protein, thus completing the reaction cycle. Several rounds of ATP-dependent interactions between DnaJ, DnaK and GrpE are required for fully efficient folding. This Leptospira interrogans serogroup Icterohaemorrhagiae serovar copenhageni (strain Fiocruz L1-130) protein is Protein GrpE.